The following is a 448-amino-acid chain: Dual specificity mitogen-activated protein kinase kinase 5 (448 aa).

Positions 18–25 are interaction with MAPK7; the sequence is VIRIKIPN. Residues 18 to 109 form the PB1 domain; the sequence is VIRIKIPNSG…EPLQIFPRAC (92 aa). The interval 64 to 68 is interaction with MAP3K2/MAP3K3; it reads DEDGD. The disordered stretch occupies residues 116-144; that stretch reads NIHGLKVNTRAGPSQHTSPVVSDSLPSNS. An interaction with MAPK7 region spans residues 117-131; that stretch reads IHGLKVNTRAGPSQH. Positions 126–144 are enriched in polar residues; it reads AGPSQHTSPVVSDSLPSNS. A Protein kinase domain is found at 166–419; sequence IRYRDTLGHG…PEELMGHPFI (254 aa). ATP contacts are provided by residues 172 to 180 and lysine 195; that span reads LGHGNGGTV. The active-site Proton acceptor is aspartate 283. Phosphoserine is present on serine 311. A Phosphothreonine modification is found at threonine 315.

Belongs to the protein kinase superfamily. STE Ser/Thr protein kinase family. MAP kinase kinase subfamily. Interacts with PARD6A, MAP3K3 and MAPK7. Forms a complex with SQSTM1 and PRKCZ or PRKCI. The cofactor is Mg(2+). In terms of processing, activated by phosphorylation on Ser/Thr by MAP kinase kinase kinases.

Its subcellular location is the cytoplasm. It carries out the reaction L-seryl-[protein] + ATP = O-phospho-L-seryl-[protein] + ADP + H(+). The catalysed reaction is L-threonyl-[protein] + ATP = O-phospho-L-threonyl-[protein] + ADP + H(+). The enzyme catalyses L-tyrosyl-[protein] + ATP = O-phospho-L-tyrosyl-[protein] + ADP + H(+). Functionally, acts as a scaffold for the formation of a ternary MAP3K2/MAP3K3-MAP3K5-MAPK7 signaling complex. Activation of this pathway appears to play a critical role in protecting cells from stress-induced apoptosis, neuronal survival and cardiac development and angiogenesis. As part of the MAPK/ERK signaling pathway, acts as a negative regulator of apoptosis in cardiomyocytes via promotion of STUB1/CHIP-mediated ubiquitination and degradation of ICER-type isoforms of CREM. This is Dual specificity mitogen-activated protein kinase kinase 5 (Map2k5) from Mus musculus (Mouse).